Here is a 443-residue protein sequence, read N- to C-terminus: Phosphoglucosamine mutase (443 aa).

S102 (phosphoserine intermediate) is an active-site residue. Positions 102, 241, 243, and 245 each coordinate Mg(2+). S102 carries the phosphoserine modification.

Belongs to the phosphohexose mutase family. Mg(2+) is required as a cofactor. In terms of processing, activated by phosphorylation.

The enzyme catalyses alpha-D-glucosamine 1-phosphate = D-glucosamine 6-phosphate. In terms of biological role, catalyzes the conversion of glucosamine-6-phosphate to glucosamine-1-phosphate. The chain is Phosphoglucosamine mutase from Polaromonas naphthalenivorans (strain CJ2).